The chain runs to 540 residues: Glucose-6-phosphate isomerase (540 aa).

Glu350 acts as the Proton donor in catalysis. Catalysis depends on residues His381 and Lys503.

This sequence belongs to the GPI family.

Its subcellular location is the cytoplasm. It carries out the reaction alpha-D-glucose 6-phosphate = beta-D-fructose 6-phosphate. The protein operates within carbohydrate biosynthesis; gluconeogenesis. It functions in the pathway carbohydrate degradation; glycolysis; D-glyceraldehyde 3-phosphate and glycerone phosphate from D-glucose: step 2/4. In terms of biological role, catalyzes the reversible isomerization of glucose-6-phosphate to fructose-6-phosphate. In Paraburkholderia phytofirmans (strain DSM 17436 / LMG 22146 / PsJN) (Burkholderia phytofirmans), this protein is Glucose-6-phosphate isomerase.